The sequence spans 243 residues: 1-(5-phosphoribosyl)-5-[(5-phosphoribosylamino)methylideneamino] imidazole-4-carboxamide isomerase (243 aa).

Asp9 acts as the Proton acceptor in catalysis. The active-site Proton donor is the Asp131.

Belongs to the HisA/HisF family.

It is found in the cytoplasm. The enzyme catalyses 1-(5-phospho-beta-D-ribosyl)-5-[(5-phospho-beta-D-ribosylamino)methylideneamino]imidazole-4-carboxamide = 5-[(5-phospho-1-deoxy-D-ribulos-1-ylimino)methylamino]-1-(5-phospho-beta-D-ribosyl)imidazole-4-carboxamide. The protein operates within amino-acid biosynthesis; L-histidine biosynthesis; L-histidine from 5-phospho-alpha-D-ribose 1-diphosphate: step 4/9. In Campylobacter jejuni (strain RM1221), this protein is 1-(5-phosphoribosyl)-5-[(5-phosphoribosylamino)methylideneamino] imidazole-4-carboxamide isomerase.